We begin with the raw amino-acid sequence, 935 residues long: Dual 3',5'-cyclic-AMP and -GMP phosphodiesterase 11A (935 aa).

Residues 41–125 (RHSSGQGASD…ASQKELRKSF (85 aa)) form a disordered region. Residues 54 to 69 (ALAGASSLAQSSARGS) show a composition bias toward low complexity. Phosphoserine occurs at positions 162, 163, and 239. 2 consecutive GAF domains span residues 217 to 370 (DLTS…GIAI) and 402 to 558 (DLEK…GLGI). Serine 424 lines the 3',5'-cyclic GMP pocket. Residues 588 to 912 (SKAEVDKFKA…RKWEELHQKR (325 aa)) form the PDEase domain. Catalysis depends on histidine 664, which acts as the Proton donor. A divalent metal cation is bound by residues histidine 668, histidine 704, aspartate 705, and aspartate 816. Positions 915 to 935 (VSAASPVPSSPSPAVAGEDRL) are disordered.

This sequence belongs to the cyclic nucleotide phosphodiesterase family. A divalent metal cation is required as a cofactor. In terms of tissue distribution, isoform 1 is expressed in brain, heart, kidney and liver, but not in prostate. Isoform 2 is specifically expressed in testis. Isoform 3 is expressed in various tissues including brain, lung, skeletal muscle, spleen, testis and prostate.

Its subcellular location is the cytoplasm. It localises to the cytosol. It catalyses the reaction 3',5'-cyclic GMP + H2O = GMP + H(+). The catalysed reaction is 3',5'-cyclic AMP + H2O = AMP + H(+). Its activity is regulated as follows. Inhibited by 3-isobutyl-1-methylxanthine (IBMX), zaprinast and dipyridamole. cGMP acts as an allosteric activator. Its function is as follows. Plays a role in signal transduction by regulating the intracellular concentration of cyclic nucleotides cAMP and cGMP. Catalyzes the hydrolysis of both cAMP and cGMP to 5'-AMP and 5'-GMP, respectively. This is Dual 3',5'-cyclic-AMP and -GMP phosphodiesterase 11A from Rattus norvegicus (Rat).